Reading from the N-terminus, the 104-residue chain is UPF0473 protein LJ_0477 (104 aa).

This sequence belongs to the UPF0473 family.

In Lactobacillus johnsonii (strain CNCM I-12250 / La1 / NCC 533), this protein is UPF0473 protein LJ_0477.